Here is a 468-residue protein sequence, read N- to C-terminus: Lactate utilization protein B (468 aa).

2 consecutive 4Fe-4S ferredoxin-type domains span residues 303 to 333 (GTQF…GHAY) and 352 to 381 (YENY…LHEL). [4Fe-4S] cluster contacts are provided by Cys-312, Cys-315, Cys-318, Cys-322, Cys-365, Cys-368, and Cys-372. A disordered region spans residues 442–468 (PAWTDSKDLPQPNKQTVRDWFKKRGNA). A compositionally biased stretch (basic and acidic residues) spans 457–468 (TVRDWFKKRGNA).

Belongs to the LutB/YkgF family.

Its function is as follows. Is involved in L-lactate degradation and allows cells to grow with lactate as the sole carbon source. Has probably a role as an electron transporter during oxidation of L-lactate. The polypeptide is Lactate utilization protein B (Exiguobacterium sp. (strain ATCC BAA-1283 / AT1b)).